The sequence spans 362 residues: MSLADQALSYVRAISPYQPGKPITELAREMGIPVEKIVKLASNENPLGMSPKARKAVEAAISGIERYPDQFDLIAKVAERCGVSSNQIVLGNGSNDVLDLIARVFLAPGRSAVFAQHAFAVYPLATLSTGAELISTPAKNYGHDLNAMRAAIRPDTRIVWIANPNNPTGNFLPYPEVRAFLEVVPKDVVVVLDEAYNEYIPPAERVDTATWIKDFPNLVVCRTFSKIFGLAGLRVGYALASTEVADLMNRIRQPFNVNNLAIAAAVAALDDHLFVADSYELNRRGMEQIIAGLKRFGLEHIPSHGNFVTFRAGDAAVVNQKLLKQGVIVRPIGGYGLPEWLRVTIGTEPENARFLEALEKAL.

Residue Lys-226 is modified to N6-(pyridoxal phosphate)lysine.

Belongs to the class-II pyridoxal-phosphate-dependent aminotransferase family. Histidinol-phosphate aminotransferase subfamily. In terms of assembly, homodimer. Requires pyridoxal 5'-phosphate as cofactor.

It carries out the reaction L-histidinol phosphate + 2-oxoglutarate = 3-(imidazol-4-yl)-2-oxopropyl phosphate + L-glutamate. It functions in the pathway amino-acid biosynthesis; L-histidine biosynthesis; L-histidine from 5-phospho-alpha-D-ribose 1-diphosphate: step 7/9. The chain is Histidinol-phosphate aminotransferase 1 from Dechloromonas aromatica (strain RCB).